We begin with the raw amino-acid sequence, 269 residues long: Shikimate dehydrogenase (NADP(+)) (269 aa).

Shikimate is bound by residues 14-16 (SLS) and Thr61. The active-site Proton acceptor is Lys65. An NADP(+)-binding site is contributed by Glu76. Shikimate is bound by residues Asn85 and Asp99. NADP(+) contacts are provided by residues 123-127 (GAGGA), 146-151 (NRTPER), and Ile209. Tyr211 provides a ligand contact to shikimate. Gly231 contributes to the NADP(+) binding site.

The protein belongs to the shikimate dehydrogenase family. As to quaternary structure, homodimer.

It carries out the reaction shikimate + NADP(+) = 3-dehydroshikimate + NADPH + H(+). The protein operates within metabolic intermediate biosynthesis; chorismate biosynthesis; chorismate from D-erythrose 4-phosphate and phosphoenolpyruvate: step 4/7. Functionally, involved in the biosynthesis of the chorismate, which leads to the biosynthesis of aromatic amino acids. Catalyzes the reversible NADPH linked reduction of 3-dehydroshikimate (DHSA) to yield shikimate (SA). This Methanothrix thermoacetophila (strain DSM 6194 / JCM 14653 / NBRC 101360 / PT) (Methanosaeta thermophila) protein is Shikimate dehydrogenase (NADP(+)).